We begin with the raw amino-acid sequence, 453 residues long: Homogentisate 1,2-dioxygenase (453 aa).

Histidine 304 acts as the Proton acceptor in catalysis. Residues histidine 347 and glutamate 353 each coordinate Fe cation. Residues tyrosine 362 and histidine 383 each contribute to the homogentisate site. Position 383 (histidine 383) interacts with Fe cation.

It belongs to the homogentisate dioxygenase family. In terms of assembly, hexamer; dimer of trimers. Fe cation serves as cofactor.

It catalyses the reaction homogentisate + O2 = 4-maleylacetoacetate + H(+). It participates in amino-acid degradation; L-phenylalanine degradation; acetoacetate and fumarate from L-phenylalanine: step 4/6. Its function is as follows. Involved in the catabolism of homogentisate (2,5-dihydroxyphenylacetate or 2,5-OH-PhAc), a central intermediate in the degradation of phenylalanine and tyrosine. Catalyzes the oxidative ring cleavage of the aromatic ring of homogentisate to yield maleylacetoacetate. In Sinorhizobium fredii (strain NBRC 101917 / NGR234), this protein is Homogentisate 1,2-dioxygenase.